A 1388-amino-acid chain; its full sequence is Rho-associated protein kinase 2 (1388 aa).

The interval 1-24 (MSRPPPTGKMPGAPEAAAGDGAGA) is disordered. The 263-residue stretch at 92 to 354 (YDVVKVIGRG…VEEIKSASFF (263 aa)) folds into the Protein kinase domain. ATP is bound by residues 98-106 (IGRGAFGEV) and lysine 121. The Proton acceptor role is filled by aspartate 214. The region spanning 357–425 (DQWNWDNIRE…FRENLLLSDS (69 aa)) is the AGC-kinase C-terminal domain. The segment at 363 to 784 (NIRETAAPVV…LNELLKQKDV (422 aa)) is interaction with PPP1R12A. The tract at residues 373–420 (PELSSDIDSSNFDDIEDDKGDVETFPIPKAFVGNQLPFIGFTYFRENL) is interaction with NPM1. Residue threonine 414 is modified to Phosphothreonine; by ROCK2. 2 coiled-coil regions span residues 439-1024 (SEES…EKQL) and 1052-1131 (SDTD…IGMD). The REM-1 domain occupies 497–573 (TLRQLEREKA…LDEANALLRT (77 aa)). The segment covering 513–530 (AEYQRKADHEADKKRNLE) has biased composition (basic and acidic residues). Positions 513–532 (AEYQRKADHEADKKRNLEND) are disordered. Tyrosine 722 carries the post-translational modification Phosphotyrosine; by SRC. A RhoBD domain is found at 979-1047 (TSDVANLANE…LAEIMNRKEP (69 aa)). The segment at 979–1047 (TSDVANLANE…LAEIMNRKEP (69 aa)) is RHOA binding. Residue serine 1137 is modified to Phosphoserine. The PH domain occupies 1150 to 1349 (ESRLEGWLSL…WVSRLVKKIP (200 aa)). Phosphothreonine is present on threonine 1212. The Phorbol-ester/DAG-type zinc finger occupies 1260–1315 (GHEFIPTLYHFPTNCEACMKPLWHMFKPPPALECSRCHIKCHKDHMDKKEEIIAPC). The segment at 1345-1388 (VKKIPKKPPAPDPFARSSPRTSMKIQQNQSIRRPSRQLAPNKPS) is disordered. Phosphoserine occurs at positions 1362 and 1374. Residues 1362–1376 (SPRTSMKIQQNQSIR) show a composition bias toward polar residues.

It belongs to the protein kinase superfamily. AGC Ser/Thr protein kinase family. As to quaternary structure, homodimer. Interacts with IRS1. Interacts with RAF1. Interacts with RHOA (activated by GTP), RHOB, RHOC. Interacts with PPP1R12A. Interacts with EP300. Interacts with CHORDC1. Interacts with BRCA2. Interacts with NPM1; this interaction enhances its activity. Interacts with SORL1. Interacts with PJVK. The cofactor is Mg(2+). Autophosphorylated. Phosphorylation at Tyr-722 reduces its binding to RHOA and is crucial for focal adhesion dynamics. Dephosphorylation by PTPN11 stimulates its RHOA binding activity. In terms of processing, cleaved by granzyme B during apoptosis. This leads to constitutive activation of the kinase and membrane blebbing. In terms of tissue distribution, highly expressed in brain, lung, liver, skeletal muscle, kidney and testis.

Its subcellular location is the cytoplasm. The protein resides in the cell membrane. The protein localises to the nucleus. It localises to the cytoskeleton. It is found in the microtubule organizing center. Its subcellular location is the centrosome. The catalysed reaction is L-seryl-[protein] + ATP = O-phospho-L-seryl-[protein] + ADP + H(+). It catalyses the reaction L-threonyl-[protein] + ATP = O-phospho-L-threonyl-[protein] + ADP + H(+). Its activity is regulated as follows. Activated by RHOA binding. Inhibited by Y-27632. Protein kinase which is a key regulator of actin cytoskeleton and cell polarity. Involved in regulation of smooth muscle contraction, actin cytoskeleton organization, stress fiber and focal adhesion formation, neurite retraction, cell adhesion and motility via phosphorylation of ADD1, BRCA2, CNN1, EZR, DPYSL2, EP300, MSN, MYL9/MLC2, NPM1, RDX, PPP1R12A and VIM. Phosphorylates SORL1 and IRF4. Acts as a negative regulator of VEGF-induced angiogenic endothelial cell activation. Positively regulates the activation of p42/MAPK1-p44/MAPK3 and of p90RSK/RPS6KA1 during myogenic differentiation. Plays an important role in the timely initiation of centrosome duplication. Inhibits keratinocyte terminal differentiation. May regulate closure of the eyelids and ventral body wall through organization of actomyosin bundles. Plays a critical role in the regulation of spine and synaptic properties in the hippocampus. Plays a role in placental homeostasis during the perinatal period. Plays an important role in generating the circadian rhythm of the aortic myofilament Ca(2+) sensitivity and vascular contractility by modulating the myosin light chain phosphorylation. In Rattus norvegicus (Rat), this protein is Rho-associated protein kinase 2 (Rock2).